A 189-amino-acid polypeptide reads, in one-letter code: Chitin synthase 1 (189 aa).

It belongs to the chitin synthase family.

The protein localises to the cell membrane. The enzyme catalyses [(1-&gt;4)-N-acetyl-beta-D-glucosaminyl](n) + UDP-N-acetyl-alpha-D-glucosamine = [(1-&gt;4)-N-acetyl-beta-D-glucosaminyl](n+1) + UDP + H(+). Polymerizes chitin, a structural polymer of the cell wall and septum, by transferring the sugar moiety of UDP-GlcNAc to the non-reducing end of the growing chitin polymer. This is Chitin synthase 1 (CHS1) from Exophiala exophialae (Black yeast-like fungus).